The sequence spans 389 residues: Growth/differentiation factor 2 (389 aa).

An N-terminal signal peptide occupies residues Met-1–Glu-20. A propeptide spanning residues Lys-21–Lys-280 is cleaved from the precursor. Asn-65, Asn-118, Asn-127, and Asn-232 each carry an N-linked (GlcNAc...) asparagine glycan. Polar residues predominate over residues Gln-263 to Val-272. Positions Gln-263–Lys-284 are disordered. The span at Asn-274 to Lys-284 shows a compositional bias: basic residues. Cystine bridges form between Cys-288–Cys-354, Cys-317–Cys-386, and Cys-321–Cys-388. An N-linked (GlcNAc...) asparagine glycan is attached at Asn-342.

Belongs to the TGF-beta family. In terms of assembly, homodimer; disulfide-linked. A reversible disulfide bond can be formed between the two subunits in the homodimer; this has no effect on gdf2 activity.

Its subcellular location is the secreted. Its function is as follows. Potent circulating inhibitor of angiogenesis. Signals through the type I activin receptor ACVRL1 but not other Alks. Signaling through SMAD1 in endothelial cells requires TGF-beta coreceptor endoglin/eng. The polypeptide is Growth/differentiation factor 2 (gdf2) (Danio rerio (Zebrafish)).